The chain runs to 611 residues: Chloroplast sensor kinase, chloroplastic (611 aa).

Residues 1–79 (MLLSAIASQT…PGGGETMVAS (79 aa)) constitute a chloroplast transit peptide. Positions 17-50 (NLHFSNSIPNPRPSNPSLKLLNASSSSSSSSSSS) are disordered. The segment covering 40–50 (SSSSSSSSSSS) has biased composition (low complexity). The interval 116–300 (DFQRLCLEQL…VMDQKTMLLQ (185 aa)) is GAF. Cys-121 is a binding site for [3Fe-4S] cluster. At Ser-188 the chain carries Phosphoserine. The region spanning 312-602 (KLVEQIRGPL…RVELWLPAFP (291 aa)) is the Histidine kinase domain. A coiled-coil region spans residues 345 to 380 (VEDLIVQGDQIKDTLEELQDAVHLTKANIVRHNEEA). Positions 385–402 (NKTHNETRRSKYEHKDPI) are enriched in basic and acidic residues. The disordered stretch occupies residues 385–420 (NKTHNETRRSKYEHKDPIDGSQISSTRLSLGSGLDD).

This sequence belongs to the chloroplast sensor kinase protein family. Self-interacts. Interacts with the plastoquinone analog 2,5-dibromo-3-methyl-5-isopropyl-p-benzoquinone (DBMIB) and with SIGA/SIG1. Requires [3Fe-4S] cluster as cofactor. Post-translationally, autophosphorylated, possibly on tyrosine residues, in photosystem I (PS I) light and in the presence of manganese ions Mn(2+), to a lesser degree, in the presence of calcium ions Ca(2+), but not in the presence of magnesium ions Mg(2+). Dithiothreitol (DTT) stimulates autophosphorylation. Phosphorylated on Ser-188 in vivo after exposure to far-red light (when plastoquinone (PQ) is oxidized). Not phosphorylated under orange light (reduces PQ).

Its subcellular location is the plastid. It is found in the chloroplast stroma. It carries out the reaction L-tyrosyl-[protein] + ATP = O-phospho-L-tyrosyl-[protein] + ADP + H(+). In terms of biological role, sensor kinase that senses the plastoquinone (PQ) redox state involved in stoichiometry adjustment of both photosystems (e.g. long-term adaptation via transcriptional regulation of reaction center genes of photosystems I and II) and state transitions (e.g. short-term adaptation involving reversible post-translational phosphorylation of light-harvesting complex II, LHC II), thus linking photosynthesis with gene expression in chloroplasts. Autophosphorylates, probably on a tyrosine residue. Probably phosphorylates SIGA/SIG1 in response to plastoquinone redox state modification. Reduced PQ suppresses its autophosphorylation activity. Represses expression of a number of chloroplast-encoded genes. This chain is Chloroplast sensor kinase, chloroplastic, found in Arabidopsis thaliana (Mouse-ear cress).